A 356-amino-acid chain; its full sequence is S-adenosylmethionine:tRNA ribosyltransferase-isomerase (356 aa).

It belongs to the QueA family. As to quaternary structure, monomer.

The protein resides in the cytoplasm. It carries out the reaction 7-aminomethyl-7-carbaguanosine(34) in tRNA + S-adenosyl-L-methionine = epoxyqueuosine(34) in tRNA + adenine + L-methionine + 2 H(+). The protein operates within tRNA modification; tRNA-queuosine biosynthesis. Functionally, transfers and isomerizes the ribose moiety from AdoMet to the 7-aminomethyl group of 7-deazaguanine (preQ1-tRNA) to give epoxyqueuosine (oQ-tRNA). The sequence is that of S-adenosylmethionine:tRNA ribosyltransferase-isomerase from Xanthomonas campestris pv. campestris (strain B100).